Reading from the N-terminus, the 142-residue chain is Large ribosomal subunit protein uL13 (142 aa).

It belongs to the universal ribosomal protein uL13 family. As to quaternary structure, part of the 50S ribosomal subunit.

Functionally, this protein is one of the early assembly proteins of the 50S ribosomal subunit, although it is not seen to bind rRNA by itself. It is important during the early stages of 50S assembly. This Pelobacter propionicus (strain DSM 2379 / NBRC 103807 / OttBd1) protein is Large ribosomal subunit protein uL13.